Consider the following 183-residue polypeptide: Peptide deformylase (183 aa).

Fe cation-binding residues include C110 and H153. E154 is an active-site residue. H157 serves as a coordination point for Fe cation.

Belongs to the polypeptide deformylase family. Requires Fe(2+) as cofactor.

The catalysed reaction is N-terminal N-formyl-L-methionyl-[peptide] + H2O = N-terminal L-methionyl-[peptide] + formate. In terms of biological role, removes the formyl group from the N-terminal Met of newly synthesized proteins. Requires at least a dipeptide for an efficient rate of reaction. N-terminal L-methionine is a prerequisite for activity but the enzyme has broad specificity at other positions. The protein is Peptide deformylase of Listeria monocytogenes serotype 4a (strain HCC23).